The chain runs to 242 residues: Adenosine 5'-phosphosulfate reductase (242 aa).

[4Fe-4S] cluster-binding residues include cysteine 125, cysteine 126, cysteine 208, and cysteine 211. Cysteine 234 (nucleophile; cysteine thiosulfonate intermediate) is an active-site residue.

The protein belongs to the PAPS reductase family. CysH subfamily. Requires [4Fe-4S] cluster as cofactor.

Its subcellular location is the cytoplasm. It carries out the reaction [thioredoxin]-disulfide + sulfite + AMP + 2 H(+) = adenosine 5'-phosphosulfate + [thioredoxin]-dithiol. Its pathway is sulfur metabolism; hydrogen sulfide biosynthesis; sulfite from sulfate. Functionally, catalyzes the formation of sulfite from adenosine 5'-phosphosulfate (APS) using thioredoxin as an electron donor. In Staphylococcus saprophyticus subsp. saprophyticus (strain ATCC 15305 / DSM 20229 / NCIMB 8711 / NCTC 7292 / S-41), this protein is Adenosine 5'-phosphosulfate reductase.